A 397-amino-acid chain; its full sequence is Enoyl-[acyl-carrier-protein] reductase [NADH] (397 aa).

Residues 48-53 (GASTGY), 74-75 (FE), 111-112 (DA), and 139-140 (VA) contribute to the NAD(+) site. Tyr225 contributes to the substrate binding site. The active-site Proton donor is the Tyr235. Residues Lys244 and 273-275 (VVT) each bind NAD(+).

It belongs to the TER reductase family. As to quaternary structure, monomer.

The catalysed reaction is a 2,3-saturated acyl-[ACP] + NAD(+) = a (2E)-enoyl-[ACP] + NADH + H(+). It participates in lipid metabolism; fatty acid biosynthesis. Involved in the final reduction of the elongation cycle of fatty acid synthesis (FAS II). Catalyzes the reduction of a carbon-carbon double bond in an enoyl moiety that is covalently linked to an acyl carrier protein (ACP). The chain is Enoyl-[acyl-carrier-protein] reductase [NADH] from Burkholderia pseudomallei (strain 668).